The chain runs to 171 residues: Deoxyuridine 5'-triphosphate nucleotidohydrolase (171 aa).

E143 contributes to the Mg(2+) binding site.

It belongs to the dUTPase family. In terms of assembly, homotrimer. Mg(2+) serves as cofactor.

It catalyses the reaction dUTP + H2O = dUMP + diphosphate + H(+). Its pathway is pyrimidine metabolism; dUMP biosynthesis; dUMP from dCTP (dUTP route): step 2/2. Functionally, this enzyme is involved in nucleotide metabolism: it produces dUMP, the immediate precursor of thymidine nucleotides and it decreases the intracellular concentration of dUTP, preventing uracil incorporation into DNA. The polypeptide is Deoxyuridine 5'-triphosphate nucleotidohydrolase (DUT) (Oryza sativa subsp. japonica (Rice)).